We begin with the raw amino-acid sequence, 185 residues long: UPF0397 protein LJ_1703 (185 aa).

The next 5 helical transmembrane spans lie at 6-26 (GLSV…VILA), 46-66 (FLAL…GFIG), 78-98 (TWWS…LYGM), 113-133 (IGFN…IAPV), and 147-167 (FLQG…LGTI).

This sequence belongs to the UPF0397 family.

The protein localises to the cell membrane. The polypeptide is UPF0397 protein LJ_1703 (Lactobacillus johnsonii (strain CNCM I-12250 / La1 / NCC 533)).